The primary structure comprises 392 residues: Formate-dependent phosphoribosylglycinamide formyltransferase (392 aa).

N(1)-(5-phospho-beta-D-ribosyl)glycinamide contacts are provided by residues 22–23 (EL) and Glu-82. Residues Arg-114, Lys-155, 160–165 (SSGKGQ), 195–198 (EGVV), and Glu-203 contribute to the ATP site. Residues 119 to 308 (RLAAEELQLP…EFALHVRAFL (190 aa)) form the ATP-grasp domain. Residues Glu-267 and Glu-279 each contribute to the Mg(2+) site. Residues Asp-286, Lys-355, and 362–363 (RR) contribute to the N(1)-(5-phospho-beta-D-ribosyl)glycinamide site.

The protein belongs to the PurK/PurT family. As to quaternary structure, homodimer.

The catalysed reaction is N(1)-(5-phospho-beta-D-ribosyl)glycinamide + formate + ATP = N(2)-formyl-N(1)-(5-phospho-beta-D-ribosyl)glycinamide + ADP + phosphate + H(+). It participates in purine metabolism; IMP biosynthesis via de novo pathway; N(2)-formyl-N(1)-(5-phospho-D-ribosyl)glycinamide from N(1)-(5-phospho-D-ribosyl)glycinamide (formate route): step 1/1. Functionally, involved in the de novo purine biosynthesis. Catalyzes the transfer of formate to 5-phospho-ribosyl-glycinamide (GAR), producing 5-phospho-ribosyl-N-formylglycinamide (FGAR). Formate is provided by PurU via hydrolysis of 10-formyl-tetrahydrofolate. The protein is Formate-dependent phosphoribosylglycinamide formyltransferase of Shigella boydii serotype 18 (strain CDC 3083-94 / BS512).